The sequence spans 393 residues: Proteasome-activating nucleotidase (393 aa).

A coiled-coil region spans residues 14 to 53 (SDEVQLVRLLEEKIKSLQIEIENLRKELNYYKAEMEKMLS). Residues 178–183 (GTGKTM) and Y317 each bind ATP. The interval 391 to 393 (KYS) is docks into pockets in the proteasome alpha-ring to cause gate opening.

This sequence belongs to the AAA ATPase family. Homohexamer. The hexameric complex has a two-ring architecture resembling a top hat that caps the 20S proteasome core at one or both ends. Upon ATP-binding, the C-terminus of PAN interacts with the alpha-rings of the proteasome core by binding to the intersubunit pockets.

It is found in the cytoplasm. In terms of biological role, ATPase which is responsible for recognizing, binding, unfolding and translocation of substrate proteins into the archaeal 20S proteasome core particle. Is essential for opening the gate of the 20S proteasome via an interaction with its C-terminus, thereby allowing substrate entry and access to the site of proteolysis. Thus, the C-termini of the proteasomal ATPase function like a 'key in a lock' to induce gate opening and therefore regulate proteolysis. Unfolding activity requires energy from ATP hydrolysis, whereas ATP binding alone promotes ATPase-20S proteasome association which triggers gate opening, and supports translocation of unfolded substrates. This is Proteasome-activating nucleotidase from Saccharolobus islandicus (strain M.16.27) (Sulfolobus islandicus).